The primary structure comprises 183 residues: uncharacterized protein (183 aa).

Residue K21 forms a Glycyl lysine isopeptide (Lys-Gly) (interchain with G-Cter in ubiquitin) linkage. Disordered regions lie at residues 24 to 111 (NTTT…QNDN) and 160 to 183 (PQSI…TRRP). The span at 99–108 (QQQQQQQQQQ) shows a compositional bias: low complexity. The span at 170–183 (LPPSNASNTTTRRP) shows a compositional bias: polar residues.

It localises to the cytoplasm. This is an uncharacterized protein from Saccharomyces cerevisiae (strain ATCC 204508 / S288c) (Baker's yeast).